Consider the following 415-residue polypeptide: Methylaspartate ammonia-lyase 2 (415 aa).

(2S,3S)-3-methyl-L-aspartate is bound at residue Gln-173. Residues Asp-238, Glu-273, and Asp-307 each contribute to the Mg(2+) site. Gln-329 contributes to the (2S,3S)-3-methyl-L-aspartate binding site. Lys-331 serves as the catalytic Proton acceptor. (2S,3S)-3-methyl-L-aspartate is bound at residue 360-361; the sequence is TC.

It belongs to the methylaspartate ammonia-lyase family. In terms of assembly, homodimer. Requires Mg(2+) as cofactor.

It carries out the reaction (2S,3S)-3-methyl-L-aspartate = mesaconate + NH4(+). It functions in the pathway amino-acid degradation; L-glutamate degradation via mesaconate pathway; acetate and pyruvate from L-glutamate: step 2/4. Involved in the methylaspartate cycle. Catalyzes the formation of the alpha,beta-unsaturated bond by the reversible anti elimination of ammonia from L-threo-beta-methylaspartate (L-threo-(2S,3S)-3-methylaspartate) to give mesaconate. The sequence is that of Methylaspartate ammonia-lyase 2 from Carboxydothermus hydrogenoformans (strain ATCC BAA-161 / DSM 6008 / Z-2901).